Reading from the N-terminus, the 200-residue chain is Small ribosomal subunit protein uS4 (200 aa).

The S4 RNA-binding domain maps to 92 to 155; sequence SRLDAVVYSL…QNLDIIKESV (64 aa).

This sequence belongs to the universal ribosomal protein uS4 family. As to quaternary structure, part of the 30S ribosomal subunit. Contacts protein S5. The interaction surface between S4 and S5 is involved in control of translational fidelity.

One of the primary rRNA binding proteins, it binds directly to 16S rRNA where it nucleates assembly of the body of the 30S subunit. Functionally, with S5 and S12 plays an important role in translational accuracy. This is Small ribosomal subunit protein uS4 from Staphylococcus epidermidis (strain ATCC 35984 / DSM 28319 / BCRC 17069 / CCUG 31568 / BM 3577 / RP62A).